Reading from the N-terminus, the 32-residue chain is Cruzioseptin-9 (32 aa).

Q29 is modified (glutamine amide). The propeptide occupies E31–Q32.

As to expression, expressed by the skin glands.

The protein localises to the secreted. Has antimicrobial activity. This Cruziohyla calcarifer (Splendid leaf frog) protein is Cruzioseptin-9.